The primary structure comprises 197 residues: Cell division protein SepF (197 aa).

Positions 15–91 (DEEEVESPEE…PPSKSNGKNV (77 aa)) are disordered. The span at 22–31 (PEERQRRVVQ) shows a compositional bias: basic and acidic residues. The segment covering 37–47 (TNNVQQNQPQQ) has biased composition (low complexity). 2 stretches are compositionally biased toward polar residues: residues 48-58 (SERSYSNQSKL) and 78-91 (RMNQ…GKNV).

It belongs to the SepF family. In terms of assembly, homodimer. Interacts with FtsZ.

It is found in the cytoplasm. In terms of biological role, cell division protein that is part of the divisome complex and is recruited early to the Z-ring. Probably stimulates Z-ring formation, perhaps through the cross-linking of FtsZ protofilaments. Its function overlaps with FtsA. The sequence is that of Cell division protein SepF from Staphylococcus haemolyticus (strain JCSC1435).